Here is a 66-residue protein sequence, read N- to C-terminus: uncharacterized protein (66 aa).

2 helical membrane passes run 6–26 and 39–59; these read KIIM…HFVG and VTFF…SILL.

It is found in the cell membrane. This is an uncharacterized protein from Bacillus subtilis (strain 168).